The primary structure comprises 158 residues: Sec-independent protein translocase protein TatB (158 aa).

Residues Met1 to Gly21 form a helical membrane-spanning segment. The disordered stretch occupies residues Arg73–Ala158. A compositionally biased stretch (basic and acidic residues) spans Ala83–Pro92. 2 stretches are compositionally biased toward low complexity: residues Lys94–Ala132 and Ala138–Ala158.

It belongs to the TatB family. The Tat system comprises two distinct complexes: a TatABC complex, containing multiple copies of TatA, TatB and TatC subunits, and a separate TatA complex, containing only TatA subunits. Substrates initially bind to the TatABC complex, which probably triggers association of the separate TatA complex to form the active translocon.

The protein resides in the cell inner membrane. In terms of biological role, part of the twin-arginine translocation (Tat) system that transports large folded proteins containing a characteristic twin-arginine motif in their signal peptide across membranes. Together with TatC, TatB is part of a receptor directly interacting with Tat signal peptides. TatB may form an oligomeric binding site that transiently accommodates folded Tat precursor proteins before their translocation. The chain is Sec-independent protein translocase protein TatB from Cereibacter sphaeroides (strain ATCC 17029 / ATH 2.4.9) (Rhodobacter sphaeroides).